The following is a 328-amino-acid chain: Probable D,D-dipeptide transport ATP-binding protein DdpD (328 aa).

Residues 6 to 257 (LDIQQLHLSF…PRHPYTIGLL (252 aa)) form the ABC transporter domain. 42-49 (GESGSGKS) contacts ATP.

It belongs to the ABC transporter superfamily. In terms of assembly, the complex is composed of two ATP-binding proteins (DdpD and DdpF), two transmembrane proteins (DdpB and DdpC) and a solute-binding protein (DdpA).

The protein resides in the cell inner membrane. In terms of biological role, part of the ABC transporter complex DdpABCDF, which is probably involved in D,D-dipeptide transport. Probably responsible for energy coupling to the transport system. In Escherichia coli (strain K12), this protein is Probable D,D-dipeptide transport ATP-binding protein DdpD.